A 235-amino-acid chain; its full sequence is Small ribosomal subunit protein uS3 (235 aa).

Positions 39-107 constitute a KH type-2 domain; that stretch reads VRSYVKKKLI…PAQVNISEIR (69 aa).

It belongs to the universal ribosomal protein uS3 family. In terms of assembly, part of the 30S ribosomal subunit. Forms a tight complex with proteins S10 and S14.

Functionally, binds the lower part of the 30S subunit head. Binds mRNA in the 70S ribosome, positioning it for translation. This is Small ribosomal subunit protein uS3 from Buchnera aphidicola subsp. Cinara cedri (strain Cc).